We begin with the raw amino-acid sequence, 195 residues long: Interferon omega-1 (195 aa).

A signal peptide spans 1–23 (MAFVLSLLMALVLVSYGPGGSLG). Cystine bridges form between Cys24–Cys122 and Cys52–Cys162.

This sequence belongs to the alpha/beta interferon family.

It is found in the secreted. The chain is Interferon omega-1 (IFNW1) from Bos taurus (Bovine).